A 326-amino-acid chain; its full sequence is Beta-ketoacyl-[acyl-carrier-protein] synthase III (326 aa).

Residues C120 and H253 contribute to the active site. The tract at residues 254–258 is ACP-binding; that stretch reads QANIR. Residue N283 is part of the active site.

The protein belongs to the thiolase-like superfamily. FabH family. As to quaternary structure, homodimer.

Its subcellular location is the cytoplasm. It carries out the reaction malonyl-[ACP] + acetyl-CoA + H(+) = 3-oxobutanoyl-[ACP] + CO2 + CoA. The protein operates within lipid metabolism; fatty acid biosynthesis. Its function is as follows. Catalyzes the condensation reaction of fatty acid synthesis by the addition to an acyl acceptor of two carbons from malonyl-ACP. Catalyzes the first condensation reaction which initiates fatty acid synthesis and may therefore play a role in governing the total rate of fatty acid production. Possesses both acetoacetyl-ACP synthase and acetyl transacylase activities. Its substrate specificity determines the biosynthesis of branched-chain and/or straight-chain of fatty acids. The polypeptide is Beta-ketoacyl-[acyl-carrier-protein] synthase III (Cupriavidus pinatubonensis (strain JMP 134 / LMG 1197) (Cupriavidus necator (strain JMP 134))).